A 354-amino-acid polypeptide reads, in one-letter code: Holliday junction branch migration complex subunit RuvB (354 aa).

Residues 4 to 198 (TTDYGASNTG…FGFTAHLDFY (195 aa)) are large ATPase domain (RuvB-L). Residues Leu-37, Arg-38, Gly-79, Lys-82, Thr-83, Thr-84, 145-147 (EDF), Arg-188, Tyr-198, and Arg-235 each bind ATP. Residue Thr-83 coordinates Mg(2+). The tract at residues 199-269 (PHEELEKLIE…DVKEALALYQ (71 aa)) is small ATPAse domain (RuvB-S). Positions 272–354 (SEGLDRLDIA…TPKDDVSKLF (83 aa)) are head domain (RuvB-H). DNA contacts are provided by Arg-327 and Arg-332.

Belongs to the RuvB family. Homohexamer. Forms an RuvA(8)-RuvB(12)-Holliday junction (HJ) complex. HJ DNA is sandwiched between 2 RuvA tetramers; dsDNA enters through RuvA and exits via RuvB. An RuvB hexamer assembles on each DNA strand where it exits the tetramer. Each RuvB hexamer is contacted by two RuvA subunits (via domain III) on 2 adjacent RuvB subunits; this complex drives branch migration. In the full resolvosome a probable DNA-RuvA(4)-RuvB(12)-RuvC(2) complex forms which resolves the HJ.

The protein resides in the cytoplasm. It catalyses the reaction ATP + H2O = ADP + phosphate + H(+). Its function is as follows. The RuvA-RuvB-RuvC complex processes Holliday junction (HJ) DNA during genetic recombination and DNA repair, while the RuvA-RuvB complex plays an important role in the rescue of blocked DNA replication forks via replication fork reversal (RFR). RuvA specifically binds to HJ cruciform DNA, conferring on it an open structure. The RuvB hexamer acts as an ATP-dependent pump, pulling dsDNA into and through the RuvAB complex. RuvB forms 2 homohexamers on either side of HJ DNA bound by 1 or 2 RuvA tetramers; 4 subunits per hexamer contact DNA at a time. Coordinated motions by a converter formed by DNA-disengaged RuvB subunits stimulates ATP hydrolysis and nucleotide exchange. Immobilization of the converter enables RuvB to convert the ATP-contained energy into a lever motion, pulling 2 nucleotides of DNA out of the RuvA tetramer per ATP hydrolyzed, thus driving DNA branch migration. The RuvB motors rotate together with the DNA substrate, which together with the progressing nucleotide cycle form the mechanistic basis for DNA recombination by continuous HJ branch migration. Branch migration allows RuvC to scan DNA until it finds its consensus sequence, where it cleaves and resolves cruciform DNA. In Bifidobacterium longum (strain NCC 2705), this protein is Holliday junction branch migration complex subunit RuvB.